The following is an 80-amino-acid chain: Trefoil factor 3 (80 aa).

The N-terminal stretch at 1-23 (MEARVLWLLVVVLVLGSSSLAVA) is a signal peptide. One can recognise a P-type domain in the interval 30–73 (NLCEVPPKDRVDCGYPEITSEQCVNRGCCFDSSIHGVPWCFKPL). Cystine bridges form between Cys32/Cys58, Cys42/Cys57, and Cys52/Cys69.

As to quaternary structure, monomer. Homodimer; disulfide-linked.

The protein localises to the secreted. It localises to the extracellular space. It is found in the extracellular matrix. The protein resides in the cytoplasm. Functionally, involved in the maintenance and repair of the intestinal mucosa. Promotes the mobility of epithelial cells in healing processes (motogen). In Canis lupus familiaris (Dog), this protein is Trefoil factor 3 (TFF3).